Reading from the N-terminus, the 219-residue chain is Ribosomal RNA small subunit methyltransferase Nep1 (219 aa).

S-adenosyl-L-methionine-binding positions include Gly178, Gly183, and 196–201; that span reads LYKAPL.

The protein belongs to the class IV-like SAM-binding methyltransferase superfamily. RNA methyltransferase NEP1 family. In terms of assembly, homodimer.

The enzyme catalyses a pseudouridine in rRNA + S-adenosyl-L-methionine = an N(1)-methylpseudouridine in rRNA + S-adenosyl-L-homocysteine + H(+). Functionally, methyltransferase involved in ribosomal biogenesis. Specifically catalyzes the N1-methylation of the pseudouridine corresponding to position 914 in M.jannaschii 16S rRNA. This is Ribosomal RNA small subunit methyltransferase Nep1 from Thermococcus onnurineus (strain NA1).